Reading from the N-terminus, the 84-residue chain is Exodeoxyribonuclease 7 small subunit (84 aa).

This sequence belongs to the XseB family. In terms of assembly, heterooligomer composed of large and small subunits.

The protein resides in the cytoplasm. The enzyme catalyses Exonucleolytic cleavage in either 5'- to 3'- or 3'- to 5'-direction to yield nucleoside 5'-phosphates.. Functionally, bidirectionally degrades single-stranded DNA into large acid-insoluble oligonucleotides, which are then degraded further into small acid-soluble oligonucleotides. The protein is Exodeoxyribonuclease 7 small subunit of Bacillus velezensis (strain DSM 23117 / BGSC 10A6 / LMG 26770 / FZB42) (Bacillus amyloliquefaciens subsp. plantarum).